A 185-amino-acid polypeptide reads, in one-letter code: Ribosome-recycling factor (185 aa).

Belongs to the RRF family.

It is found in the cytoplasm. Functionally, responsible for the release of ribosomes from messenger RNA at the termination of protein biosynthesis. May increase the efficiency of translation by recycling ribosomes from one round of translation to another. This Streptococcus pneumoniae serotype 2 (strain D39 / NCTC 7466) protein is Ribosome-recycling factor.